A 211-amino-acid polypeptide reads, in one-letter code: MANSNTNQLHPLGATTSQTFITALNHTAASTIAINFRELIKEPKELDEASNYLYQALLDDVVAGIFIETHHLRKTGNLAALDGVGEENLESAFHICEMPNLDIFGISTAKKQMDCTCPNCDRLVAAARFAPHLEKCMGMGRISSRIASRRLATKEGSSASTSSTSTYLQSGGNTGGTDDEDDVDWSSDKRKKKSTQSSRNNGSKKNNGKTF.

Residues 115 to 136 (CTCPNCDRLVAAARFAPHLEKC) form an SGF11-type zinc finger. Residues 149–211 (RRLATKEGSS…GSKKNNGKTF (63 aa)) form a disordered region. Residues 157–166 (SSASTSSTST) are compositionally biased toward low complexity. A Phosphoserine modification is found at Ser-187. Residues 197 to 211 (SSRNNGSKKNNGKTF) show a composition bias toward low complexity.

This sequence belongs to the SGF11 family. Component of some SAGA transcription coactivator-HAT complexes, at least composed of Ada2b, not/nonstop, Pcaf/Gcn5, Sgf11 and Spt3. Within the SAGA complex, Sgf11, e(y)2, and not/nonstop form an additional subcomplex of SAGA called the DUB module (deubiquitination module). Interacts directly with not/nonstop. Interacts with the AMEX complex component xmas-2. Interacts with Cbp80; important for promoter recruitment of Sgf11 that is not associated with the DUB module.

It is found in the nucleus. The protein resides in the nucleoplasm. Its subcellular location is the cytoplasm. In terms of biological role, component of the transcription regulatory histone acetylation (HAT) complex SAGA, a multiprotein complex that activates transcription by remodeling chromatin and mediating histone acetylation and deubiquitination. Within the SAGA complex, participates in a subcomplex that specifically deubiquitinates histone H2B. The SAGA complex is recruited to specific gene promoters by activators, where it is required for transcription. Required for nuclear receptor-mediated transactivation. Binds independently on SAGA to promoters in an RNA-dependent manner. Binds to mRNA and is essential for total mRNA export from the nucleus. Required to counteract heterochromatin silencing. Controls the development of neuronal connectivity in visual system by being required for accurate axon targeting in the optic lobe. Required for expression of ecdysone-induced genes such as br/broad. The polypeptide is SAGA-associated factor 11 homolog 2 (Drosophila grimshawi (Hawaiian fruit fly)).